The primary structure comprises 288 residues: UPF0494 membrane protein C212.04c (288 aa).

The next 4 helical transmembrane spans lie at 107–127, 144–164, 174–194, and 198–218; these read WVLLIIWSIITILTIDKKFKI, IWGPIVIYVGLFILLLSAFNY, PLISMVIAWVGVVIAAFSVII, and IAGVIAAFSVIITATIAGVIA.

This sequence belongs to the UPF0494 family.

The protein localises to the cytoplasm. It is found in the endoplasmic reticulum. Its subcellular location is the membrane. The protein is UPF0494 membrane protein C212.04c of Schizosaccharomyces pombe (strain 972 / ATCC 24843) (Fission yeast).